We begin with the raw amino-acid sequence, 225 residues long: Putative adhesin RT0816 (225 aa).

Residues 1–22 (MKKLLLIAATSATILSSSISFA) form the signal peptide.

The polypeptide is Putative adhesin RT0816 (Rickettsia typhi (strain ATCC VR-144 / Wilmington)).